The following is a 206-amino-acid chain: Pyridoxine/pyridoxamine 5'-phosphate oxidase (206 aa).

Residues 55 to 60 (RVVLLK), 70 to 71 (YT), R76, K77, and Q99 contribute to the FMN site. A substrate-binding site is contributed by K60. Positions 117, 121, and 125 each coordinate substrate. FMN contacts are provided by residues 134–135 (QS) and W179. 185–187 (RLH) lines the substrate pocket. Residue R189 participates in FMN binding.

It belongs to the pyridoxamine 5'-phosphate oxidase family. In terms of assembly, homodimer. FMN is required as a cofactor.

The enzyme catalyses pyridoxamine 5'-phosphate + O2 + H2O = pyridoxal 5'-phosphate + H2O2 + NH4(+). The catalysed reaction is pyridoxine 5'-phosphate + O2 = pyridoxal 5'-phosphate + H2O2. Its pathway is cofactor metabolism; pyridoxal 5'-phosphate salvage; pyridoxal 5'-phosphate from pyridoxamine 5'-phosphate: step 1/1. The protein operates within cofactor metabolism; pyridoxal 5'-phosphate salvage; pyridoxal 5'-phosphate from pyridoxine 5'-phosphate: step 1/1. Its function is as follows. Catalyzes the oxidation of either pyridoxine 5'-phosphate (PNP) or pyridoxamine 5'-phosphate (PMP) into pyridoxal 5'-phosphate (PLP). The sequence is that of Pyridoxine/pyridoxamine 5'-phosphate oxidase from Myxococcus xanthus (strain DK1622).